Reading from the N-terminus, the 663-residue chain is Spore germination protein GerIA (663 aa).

The segment covering 1–13 (MIWNWLRKKKKSN) has biased composition (basic residues). A disordered region spans residues 1–175 (MIWNWLRKKK…SGGNSIYDFT (175 aa)). A compositionally biased stretch (basic and acidic residues) spans 47–56 (KNNEQKDSSQ). Composition is skewed to low complexity over residues 57 to 72 (DKQQ…QDKQ), 88 to 101 (PKQG…QQSA), and 122 to 150 (DKQQ…QDKQ). Transmembrane regions (helical) follow at residues 414-434 (IFVD…DFFI), 451-471 (ILRL…VAVL), 491-511 (AQVP…IDLL), 541-561 (AGLT…ASFI), and 578-598 (FLAF…IFLF).

It belongs to the GerABKA family.

It localises to the cell membrane. Functionally, required for inosine germination. This Bacillus cereus protein is Spore germination protein GerIA (gerIA).